Reading from the N-terminus, the 150-residue chain is Probable histone H2A.5 (150 aa).

Over residues 1-12 (MESSQATTKPTR) the composition is skewed to low complexity. 2 disordered regions span residues 1-28 (MESS…SVSK) and 130-150 (KSTA…PKKA). The segment covering 131-150 (STASSSQAEKASATKSPKKA) has biased composition (polar residues). Ser146 bears the Phosphoserine mark. Positions 146-149 (SPKK) match the SPKK motif motif.

Belongs to the histone H2A family. As to quaternary structure, the nucleosome is a histone octamer containing two molecules each of H2A, H2B, H3 and H4 assembled in one H3-H4 heterotetramer and two H2A-H2B heterodimers. The octamer wraps approximately 147 bp of DNA. In terms of processing, not ubiquitinated.

It is found in the nucleus. The protein localises to the chromosome. Its function is as follows. Core component of nucleosome. Nucleosomes wrap and compact DNA into chromatin, limiting DNA accessibility to the cellular machineries which require DNA as a template. Histones thereby play a central role in transcription regulation, DNA repair, DNA replication and chromosomal stability. DNA accessibility is regulated via a complex set of post-translational modifications of histones, also called histone code, and nucleosome remodeling. The chain is Probable histone H2A.5 from Arabidopsis thaliana (Mouse-ear cress).